The chain runs to 503 residues: Glycerol kinase (503 aa).

An ADP-binding site is contributed by Thr-14. ATP-binding residues include Thr-14, Thr-15, and Ser-16. Sn-glycerol 3-phosphate is bound at residue Thr-14. Arg-18 contributes to the ADP binding site. 4 residues coordinate sn-glycerol 3-phosphate: Arg-84, Glu-85, Tyr-136, and Asp-246. Residues Arg-84, Glu-85, Tyr-136, Asp-246, and Gln-247 each coordinate glycerol. The ADP site is built by Thr-268 and Gly-311. Positions 268, 311, 315, and 412 each coordinate ATP. ADP is bound by residues Gly-412 and Asn-416.

It belongs to the FGGY kinase family.

The catalysed reaction is glycerol + ATP = sn-glycerol 3-phosphate + ADP + H(+). The protein operates within polyol metabolism; glycerol degradation via glycerol kinase pathway; sn-glycerol 3-phosphate from glycerol: step 1/1. Inhibited by fructose 1,6-bisphosphate (FBP). Its function is as follows. Key enzyme in the regulation of glycerol uptake and metabolism. Catalyzes the phosphorylation of glycerol to yield sn-glycerol 3-phosphate. The chain is Glycerol kinase from Haemophilus influenzae (strain PittGG).